A 194-amino-acid chain; its full sequence is Dof zinc finger protein DOF1.7 (194 aa).

Residues 33 to 87 form a Dof-type zinc finger; it reads LKCPRCDSPNTKFCYYNNYNLSQPRHFCKNCRRYWTKGGALRNIPVGGGTRKSNK. The Zn(2+) site is built by Cys35, Cys38, Cys60, and Cys63. A disordered region spans residues 74–125; the sequence is RNIPVGGGTRKSNKRSGSSPSSNLKNQTVAEKPDHHGSGSEEKEERVSGQEM. The span at 88 to 99 shows a compositional bias: low complexity; that stretch reads RSGSSPSSNLKN. The span at 104-121 shows a compositional bias: basic and acidic residues; it reads EKPDHHGSGSEEKEERVS.

It localises to the nucleus. In terms of biological role, transcription factor that binds specifically to a 5'-AA[AG]G-3' consensus core sequence. The polypeptide is Dof zinc finger protein DOF1.7 (DOF1.7) (Arabidopsis thaliana (Mouse-ear cress)).